Consider the following 1021-residue polypeptide: tRNA wybutosine-synthesizing protein 4 (1021 aa).

S-adenosyl-L-methionine is bound by residues Arg-68, Asp-122, 171-172 (DL), and Glu-198. Residues 826 to 980 (PTEAPANLAE…STGRDVYGNR (155 aa)) enclose the JmjC domain.

It belongs to the methyltransferase superfamily. LCMT family.

It carries out the reaction 7-[(3S)-3-amino-3-carboxypropyl]wyosine(37) in tRNA(Phe) + S-adenosyl-L-methionine = 7-[(3S)-(3-amino-3-methoxycarbonyl)propyl]wyosine(37) in tRNA(Phe) + S-adenosyl-L-homocysteine. The enzyme catalyses 7-[(3S)-(3-amino-3-methoxycarbonyl)propyl]wyosine(37) in tRNA(Phe) + S-adenosyl-L-methionine + CO2 = wybutosine(37) in tRNA(Phe) + S-adenosyl-L-homocysteine + 2 H(+). It functions in the pathway tRNA modification; wybutosine-tRNA(Phe) biosynthesis. Functionally, probable S-adenosyl-L-methionine-dependent methyltransferase that acts as a component of the wybutosine biosynthesis pathway. Wybutosine is a hyper modified guanosine with a tricyclic base found at the 3'-position adjacent to the anticodon of eukaryotic phenylalanine tRNA. May methylate the carboxyl group of leucine residues to form alpha-leucine ester residues. The sequence is that of tRNA wybutosine-synthesizing protein 4 (PPM2) from Gibberella zeae (strain ATCC MYA-4620 / CBS 123657 / FGSC 9075 / NRRL 31084 / PH-1) (Wheat head blight fungus).